Consider the following 206-residue polypeptide: Small ribosomal subunit protein uS7 (206 aa).

A compositionally biased stretch (acidic residues) spans 1–19; sequence MSAEDTPEADADAAEESEP. The interval 1–25 is disordered; sequence MSAEDTPEADADAAEESEPETARAK. The residue at position 2 (serine 2) is an N-acetylserine.

This sequence belongs to the universal ribosomal protein uS7 family. In terms of assembly, part of the 30S ribosomal subunit.

Functionally, one of the primary rRNA binding proteins, it binds directly to 16S rRNA where it nucleates assembly of the head domain of the 30S subunit. Is located at the subunit interface close to the decoding center. This Haloarcula marismortui (strain ATCC 43049 / DSM 3752 / JCM 8966 / VKM B-1809) (Halobacterium marismortui) protein is Small ribosomal subunit protein uS7.